The sequence spans 372 residues: Glutamate 5-kinase (372 aa).

Lys-14 serves as a coordination point for ATP. Substrate is bound by residues Ser-54, Asp-141, and Asn-153. Position 173–174 (173–174 (TD)) interacts with ATP. The PUA domain occupies 280–358 (RGTLVLDAGA…DAIEKLLGYV (79 aa)).

This sequence belongs to the glutamate 5-kinase family.

It is found in the cytoplasm. The catalysed reaction is L-glutamate + ATP = L-glutamyl 5-phosphate + ADP. It functions in the pathway amino-acid biosynthesis; L-proline biosynthesis; L-glutamate 5-semialdehyde from L-glutamate: step 1/2. Functionally, catalyzes the transfer of a phosphate group to glutamate to form L-glutamate 5-phosphate. The polypeptide is Glutamate 5-kinase (Ectopseudomonas mendocina (strain ymp) (Pseudomonas mendocina)).